Reading from the N-terminus, the 203-residue chain is A-type ATP synthase subunit E (203 aa).

It belongs to the V-ATPase E subunit family. In terms of assembly, has multiple subunits with at least A(3), B(3), C, D, E, F, H, I and proteolipid K(x).

Its subcellular location is the cell membrane. In terms of biological role, component of the A-type ATP synthase that produces ATP from ADP in the presence of a proton gradient across the membrane. This chain is A-type ATP synthase subunit E, found in Thermococcus kodakarensis (strain ATCC BAA-918 / JCM 12380 / KOD1) (Pyrococcus kodakaraensis (strain KOD1)).